Consider the following 272-residue polypeptide: Hydroxyethylthiazole kinase (272 aa).

M44 provides a ligand contact to substrate. 2 residues coordinate ATP: K119 and T172. Residue G199 coordinates substrate.

This sequence belongs to the Thz kinase family. Requires Mg(2+) as cofactor.

The catalysed reaction is 5-(2-hydroxyethyl)-4-methylthiazole + ATP = 4-methyl-5-(2-phosphooxyethyl)-thiazole + ADP + H(+). The protein operates within cofactor biosynthesis; thiamine diphosphate biosynthesis; 4-methyl-5-(2-phosphoethyl)-thiazole from 5-(2-hydroxyethyl)-4-methylthiazole: step 1/1. Catalyzes the phosphorylation of the hydroxyl group of 4-methyl-5-beta-hydroxyethylthiazole (THZ). In Enterococcus faecalis (strain ATCC 700802 / V583), this protein is Hydroxyethylthiazole kinase.